The sequence spans 312 residues: MIEPIMSPYLTFDRQHWAQLRNSVPMTLSESDLKELQGINDHLSMTEAVEIYLPLARLLNLYVAARQSRNGVLHQFLGNTESAPPFVIGIAGSVAVGKSTTARLLKALLSRWENHPKVELITTDGFLYPNKVLTERGIMHKKGFPESYDIRRLVEFVSEVKAGQPNVTAPVYSHLTYDITDEMKVVDRPDVLIIEGLNVLQSGMDYPHDPHRVFISDFLDFSIYVDADSQLIEKWYIERFMKFRQGAFKKPGSYFSHYTALTEAQAEQKARSIWETINGKNLVENILPTKGRAHLILRKGLNHTVEEVLLRK.

92–99 serves as a coordination point for ATP; the sequence is GSVAVGKS.

The protein belongs to the prokaryotic pantothenate kinase family.

Its subcellular location is the cytoplasm. The catalysed reaction is (R)-pantothenate + ATP = (R)-4'-phosphopantothenate + ADP + H(+). It functions in the pathway cofactor biosynthesis; coenzyme A biosynthesis; CoA from (R)-pantothenate: step 1/5. The sequence is that of Pantothenate kinase (coaA) from Vibrio cholerae serotype O1 (strain ATCC 39315 / El Tor Inaba N16961).